We begin with the raw amino-acid sequence, 644 residues long: Karyogamy protein KAR9 (644 aa).

The residue at position 496 (serine 496) is a Phosphoserine. 2 disordered regions span residues 506 to 534 (SVPPLPYDETDETTLRVSRGENEKSPDSF) and 606 to 644 (PNSQVWVPSTRRRTRLRPPTPLSQLLSPREGRLDKTPTY). Composition is skewed to basic and acidic residues over residues 523-534 (SRGENEKSPDSF) and 634-644 (REGRLDKTPTY).

It localises to the nucleus. Its subcellular location is the cytoplasm. The protein resides in the cytoskeleton. Involved in karyogamy. Component of a cortical adaptor complex that orients cytoplasmic microtubules. It may be involved in anchoring cytoplasmic microtubules to the cell cortex. The chain is Karyogamy protein KAR9 (KAR9) from Saccharomyces cerevisiae (strain ATCC 204508 / S288c) (Baker's yeast).